Here is a 1488-residue protein sequence, read N- to C-terminus: Chromosome partition protein MukB (1488 aa).

Residue 34-41 coordinates ATP; that stretch reads GGNGAGKS. Coiled coils occupy residues 326 to 418, 444 to 472, and 509 to 602; these read LEAD…QYNQ, LDTF…QTAH, and RHLA…RRAP. Positions 666 to 783 are flexible hinge; that stretch reads PGGAEDQRLN…SLPIFGRAAR (118 aa). Coiled coils occupy residues 835–923, 977–1116, and 1209–1265; these read EAEI…AKLE, EMLS…AKAG, and VEAI…LQSV. Residues 1049-1074 form a disordered region; sequence ADSGAEERARQRRDELHAQLSNNRSR. Residues 1051-1065 show a composition bias toward basic and acidic residues; sequence SGAEERARQRRDELH.

Belongs to the SMC family. MukB subfamily. Homodimerization via its hinge domain. Binds to DNA via its C-terminal region. Interacts, and probably forms a ternary complex, with MukE and MukF via its C-terminal region. The complex formation is stimulated by calcium or magnesium. Interacts with tubulin-related protein FtsZ.

The protein localises to the cytoplasm. It is found in the nucleoid. In terms of biological role, plays a central role in chromosome condensation, segregation and cell cycle progression. Functions as a homodimer, which is essential for chromosome partition. Involved in negative DNA supercoiling in vivo, and by this means organize and compact chromosomes. May achieve or facilitate chromosome segregation by condensation DNA from both sides of a centrally located replisome during cell division. This is Chromosome partition protein MukB from Salmonella agona (strain SL483).